The chain runs to 824 residues: AMP deaminase 2 (824 aa).

Residues 1–43 form a disordered region; the sequence is MASYPGPGKSKAKYPFKKRAGLQASAAAPEARSGLGASPLQSA. Residues 10–20 are compositionally biased toward basic residues; sequence SKAKYPFKKRA. Arg-44 is subject to Omega-N-methylarginine. 3 positions are modified to phosphoserine: Ser-45, Ser-63, and Ser-79. Tyr-90 is modified (phosphotyrosine). A phosphoserine mark is found at Ser-96 and Ser-113. Position 133 is a phosphothreonine (Thr-133). Residues Ser-135 and Ser-137 each carry the phosphoserine modification. His-364 and His-366 together coordinate Zn(2+). Residues His-366 and 435–440 each bind substrate; that span reads KFNAKY. His-633 contributes to the Zn(2+) binding site. Residue Glu-636 participates in substrate binding. The active-site Proton acceptor is the His-655. Residue Asp-710 participates in Zn(2+) binding. Residue 711–714 participates in substrate binding; the sequence is DPLQ.

It belongs to the metallo-dependent hydrolases superfamily. Adenosine and AMP deaminases family. As to quaternary structure, homotetramer. It depends on Zn(2+) as a cofactor.

The enzyme catalyses AMP + H2O + H(+) = IMP + NH4(+). Its pathway is purine metabolism; IMP biosynthesis via salvage pathway; IMP from AMP: step 1/1. AMP deaminase plays a critical role in energy metabolism. Catalyzes the deamination of AMP to IMP and plays an important role in the purine nucleotide cycle. This is AMP deaminase 2 from Mus musculus (Mouse).